The sequence spans 196 residues: MLNLQAKLNEKKVPLLTNFPTPTSSLNNLNLFSLPLVKKKMSFKKMMKYILKTIFKPIFMACGCGSTVPPSSHSHYTPGPPVSPTVLRSPCPKIDESVAMAKESINPFEDYKKSMNQMIEERYIETESELKELLRCFLDINPSPQHNLIVRAFVDVCSHLQPPHDRRGKSLGRLLRLYVNNPLDNNDDDSHQTSSK.

The OVATE domain occupies 100–159 (MAKESINPFEDYKKSMNQMIEERYIETESELKELLRCFLDINPSPQHNLIVRAFVDVCSH).

Expressed in roots, cauline leaves, shoots, stems, flower buds and siliques.

It is found in the nucleus. Its function is as follows. Transcriptional repressor that may regulate multiple aspects of plant growth and development through the regulation of BEL1-LIKE (BLH) and KNOX TALE (KNAT) homeodomain transcription factors. This chain is Transcription repressor OFP10 (OFP10), found in Arabidopsis thaliana (Mouse-ear cress).